Reading from the N-terminus, the 386-residue chain is O-methyltransferase 11 (386 aa).

Positions 207, 231, 254, 274, and 288 each coordinate S-adenosyl-L-homocysteine. Aspartate 254 lines the S-adenosyl-L-methionine pocket. Histidine 292 (proton acceptor) is an active-site residue.

Belongs to the class I-like SAM-binding methyltransferase superfamily. Cation-independent O-methyltransferase family. As to quaternary structure, homodimer.

It catalyses the reaction dopamine + S-adenosyl-L-methionine = 4-methoxytyramine + S-adenosyl-L-homocysteine + H(+). The catalysed reaction is 3,4-dihydroxy-5-methoxyphenethylamine + S-adenosyl-L-methionine = 3-hydroxy-4,5-dimethoxyphenethylamine + S-adenosyl-L-homocysteine + H(+). The enzyme catalyses 3-hydroxy-4,5-dimethoxyphenethylamine + S-adenosyl-L-methionine = mescaline + S-adenosyl-L-homocysteine + H(+). It carries out the reaction 4-hydroxy-3,5-dimethoxyphenethylamine + S-adenosyl-L-methionine = mescaline + S-adenosyl-L-homocysteine + H(+). It functions in the pathway aromatic compound metabolism. Its pathway is alkaloid biosynthesis. Functionally, O-methyltransferase participating in the biosynthesis of natural products derived from phenylethylamine, including mescaline, a natural hallucinogen potentially used in psychotherapeutic treatments. Catalyzes the O-methylation of mescaline para hydroxyl groups, using dopamine, 3,4-dihydroxy-5-methoxyphenethylamine, 3-hydroxy-4,5-dimethoxyphenethylamine and 4-hydroxy-3,5-dimethoxyphenethylamine as substrates. The polypeptide is O-methyltransferase 11 (Lophophora williamsii (Peyote)).